A 591-amino-acid chain; its full sequence is Probable metalloprotease ARX1 (591 aa).

It belongs to the peptidase M24 family. As to quaternary structure, component of the nucleoplasmic and cytoplasmic pre-60S ribosomal particles.

It localises to the cytoplasm. It is found in the nucleus. In terms of biological role, probable metalloprotease involved in proper assembly of pre-ribosomal particles during the biogenesis of the 60S ribosomal subunit. Accompanies the pre-60S particles to the cytoplasm. The chain is Probable metalloprotease ARX1 (ARX1) from Eremothecium gossypii (strain ATCC 10895 / CBS 109.51 / FGSC 9923 / NRRL Y-1056) (Yeast).